The sequence spans 345 residues: Trace amine-associated receptor 6 (345 aa).

The Extracellular segment spans residues 1–32 (MGSNSSPPTVLQLCYENVTGSCVKTPYSPGSR). N17 carries an N-linked (GlcNAc...) asparagine glycan. Cystine bridges form between C22–C186 and C105–C190. A helical transmembrane segment spans residues 33 to 53 (VILYAVFGFGAVLAVFGNLMV). The Cytoplasmic portion of the chain corresponds to 54–68 (MISILHFKQLHSPTN). Residues 69–89 (FLIASLACADFGVGISVMPFS) form a helical membrane-spanning segment. Topologically, residues 90 to 107 (MVRSIESCWYFGRSFCTF) are extracellular. Residues 108–128 (HTCCDVAFCYSSLFHLSFISI) form a helical membrane-spanning segment. Topologically, residues 129 to 147 (DRYIAVTDPLVYPTKFTVS) are cytoplasmic. A helical transmembrane segment spans residues 148–168 (VSGICIGVSWILPLVYSGAVF). At 169–202 (YTGVYDDGLEELSSALNCVGGCQVVVNQNWVLID) the chain is on the extracellular side. The tract at residues 174 to 187 (DDGLEELSSALNCV) is extracellular Loop 2 (ECL2). Residues 203-223 (FLSFLIPTLVMIILYGNIFLV) traverse the membrane as a helical segment. The Cytoplasmic segment spans residues 224–259 (ARQQAKKIENIGSKTESSSESYKARVARRERKAAKT). The chain crosses the membrane as a helical span at residues 260–276 (LGITVVAFMISWLPYSI). Residues 277-282 (DSLVDA) are Extracellular-facing. Residues 283-302 (FMGFITPAYIYEICVWCAYY) traverse the membrane as a helical segment. Topologically, residues 303–345 (NSAMNPLIYALFYPWFKKAIKVIMSGQVFKNSSATMNLFSEQI) are cytoplasmic.

The protein belongs to the G-protein coupled receptor 1 family. As to expression, specifically expressed in neurons of the olfactory epithelium, to discrete glomeruli predominantly localized to a confined bulb region. Present in a ventral area of the main olfactory epithelium.

Its subcellular location is the cell membrane. Functionally, olfactory receptor specific for trace amines, such as beta-phenylethylamine (beta-PEA). Trace amine compounds are enriched in animal body fluids and act on trace amine-associated receptors (TAARs) to elicit both intraspecific and interspecific innate behaviors. Beta-PEA-binding causes a conformation change that triggers signaling via G(s)-class of G alpha proteins (GNAL or GNAS). This is Trace amine-associated receptor 6 from Mus musculus (Mouse).